Reading from the N-terminus, the 1308-residue chain is Cadherin-related family member 2 (1308 aa).

The first 20 residues, 1–20 (MAWLWLLCALLPAFMVSVTA), serve as a signal peptide directing secretion. Residues 21–1152 (NSPPSFGVNM…EPDQQKLLTS (1132 aa)) are Extracellular-facing. Cadherin domains are found at residues 33 to 124 (VTLP…IPVF), 125 to 241 (LNTE…DPRF), 242 to 353 (IREF…KPEF), 368 to 480 (AQVN…RPVF), 481 to 586 (SQSL…PPVV), 586 to 695 (VRGS…LPVF), 695 to 807 (FNQS…PPTL), 809 to 927 (AASL…APYF), and 929 to 1051 (PNNQ…RLQF). A helical transmembrane segment spans residues 1153–1173 (VIIGLVVSLVLVLVILITALV). At 1174-1308 (CLRKSYHRKL…TNPGLDTTDL (135 aa)) the chain is on the cytoplasmic side. Residues 1178–1308 (SYHRKLRAMK…TNPGLDTTDL (131 aa)) form a mediates interaction with USH1C and MYO7B and is required for proper localization to microvilli tips and function in microvilli organization region. Position 1245 is a phosphoserine (Ser-1245). The interval 1251-1308 (VDLDMDSKEFKRKDLPGDPPEPDPEPLTAVLSGRSAGASEQQKKNLSFTNPGLDTTDL) is disordered. A compositionally biased stretch (basic and acidic residues) spans 1255–1266 (MDSKEFKRKDLP). Residues 1288-1308 (ASEQQKKNLSFTNPGLDTTDL) are compositionally biased toward polar residues. Ser-1297 is modified (phosphoserine).

Part of the IMAC/intermicrovillar adhesion complex/intermicrovillar tip-link complex composed of ANKS4B, MYO7B, USH1C, CDHR2 and CDHR5. Interacts with MAST2. Interacts (via cytoplasmic domain) with USH1C and MYO7B; required for proper localization of CDHR2 to microvilli tips and its function in brush border differentiation.

It localises to the apical cell membrane. Its subcellular location is the cell projection. It is found in the microvillus membrane. The protein localises to the cell junction. Functionally, intermicrovillar adhesion molecule that forms, via its extracellular domain, calcium-dependent heterophilic complexes with CDHR5 on adjacent microvilli. Thereby, controls the packing of microvilli at the apical membrane of epithelial cells. Through its cytoplasmic domain, interacts with microvillus cytoplasmic proteins to form the intermicrovillar adhesion complex/IMAC. This complex plays a central role in microvilli and epithelial brush border differentiation. May also play a role in cell-cell adhesion and contact inhibition in epithelial cells. The polypeptide is Cadherin-related family member 2 (Mus musculus (Mouse)).